We begin with the raw amino-acid sequence, 160 residues long: Large ribosomal subunit protein uL18 (160 aa).

This sequence belongs to the universal ribosomal protein uL18 family. In terms of assembly, part of the 50S ribosomal subunit. Contacts the 5S and 23S rRNAs.

Its function is as follows. This is one of the proteins that bind and probably mediate the attachment of the 5S RNA into the large ribosomal subunit, where it forms part of the central protuberance. This is Large ribosomal subunit protein uL18 from Thermoplasma volcanium (strain ATCC 51530 / DSM 4299 / JCM 9571 / NBRC 15438 / GSS1).